A 170-amino-acid polypeptide reads, in one-letter code: 6,7-dimethyl-8-ribityllumazine synthase 2 (170 aa).

Residues tryptophan 25, 59 to 61 (AFE), and 83 to 85 (LVV) contribute to the 5-amino-6-(D-ribitylamino)uracil site. The Proton donor role is filled by arginine 91. Position 116 (serine 116) interacts with 5-amino-6-(D-ribitylamino)uracil. Histidine 130 contributes to the (2S)-2-hydroxy-3-oxobutyl phosphate binding site.

Belongs to the DMRL synthase family. In terms of assembly, forms an icosahedral capsid composed of 60 subunits, arranged as a dodecamer of pentamers.

The catalysed reaction is (2S)-2-hydroxy-3-oxobutyl phosphate + 5-amino-6-(D-ribitylamino)uracil = 6,7-dimethyl-8-(1-D-ribityl)lumazine + phosphate + 2 H2O + H(+). It functions in the pathway cofactor biosynthesis; riboflavin biosynthesis; riboflavin from 2-hydroxy-3-oxobutyl phosphate and 5-amino-6-(D-ribitylamino)uracil: step 1/2. In terms of biological role, catalyzes the formation of 6,7-dimethyl-8-ribityllumazine by condensation of 5-amino-6-(D-ribitylamino)uracil with 3,4-dihydroxy-2-butanone 4-phosphate. This is the penultimate step in the biosynthesis of riboflavin. This is 6,7-dimethyl-8-ribityllumazine synthase 2 from Pseudomonas syringae pv. tomato (strain ATCC BAA-871 / DC3000).